The following is a 349-amino-acid chain: UPF0283 membrane protein Ent638_2153 (349 aa).

The next 3 helical transmembrane spans lie at 70–90 (MVTAGLTLFGISVVGQGVQWT), 99–119 (WVALGGCAAGALIIGAGVGSV), and 213–233 (ESTLMIAVSPLALVDMAFIAW).

It belongs to the UPF0283 family.

The protein resides in the cell inner membrane. The chain is UPF0283 membrane protein Ent638_2153 from Enterobacter sp. (strain 638).